We begin with the raw amino-acid sequence, 400 residues long: Enoyl-[acyl-carrier-protein] reductase [NADH] (400 aa).

NAD(+) contacts are provided by residues 48 to 53 (GSSSGY), 74 to 75 (FE), 111 to 112 (DA), and 139 to 140 (LA). Y225 is a substrate binding site. Y235 acts as the Proton donor in catalysis. Residues K244 and 273-275 (VVT) contribute to the NAD(+) site.

It belongs to the TER reductase family. Monomer.

The catalysed reaction is a 2,3-saturated acyl-[ACP] + NAD(+) = a (2E)-enoyl-[ACP] + NADH + H(+). It participates in lipid metabolism; fatty acid biosynthesis. Functionally, involved in the final reduction of the elongation cycle of fatty acid synthesis (FAS II). Catalyzes the reduction of a carbon-carbon double bond in an enoyl moiety that is covalently linked to an acyl carrier protein (ACP). This chain is Enoyl-[acyl-carrier-protein] reductase [NADH], found in Shewanella piezotolerans (strain WP3 / JCM 13877).